The following is a 107-amino-acid chain: Growth-regulated alpha protein (107 aa).

Positions 1 to 34 (MARAALSAAPSNPRLLRVALLLLLLVAAGRRAAG) are cleaved as a signal peptide. Cystine bridges form between cysteine 43-cysteine 69 and cysteine 45-cysteine 85.

It belongs to the intercrine alpha (chemokine CxC) family. In terms of processing, N-terminal processed forms GRO-alpha(4-73), GRO-alpha(5-73) and GRO-alpha(6-73) are produced by proteolytic cleavage after secretion from peripheral blood monocytes.

The protein resides in the secreted. In terms of biological role, has chemotactic activity for neutrophils. May play a role in inflammation and exerts its effects on endothelial cells in an autocrine fashion. In vitro, the processed forms GRO-alpha(4-73), GRO-alpha(5-73) and GRO-alpha(6-73) show a 30-fold higher chemotactic activity. This Homo sapiens (Human) protein is Growth-regulated alpha protein (CXCL1).